Reading from the N-terminus, the 338-residue chain is Anthranilate phosphoribosyltransferase (338 aa).

5-phospho-alpha-D-ribose 1-diphosphate-binding positions include glycine 81, 84–85, threonine 89, 91–94, 109–117, and alanine 121; these read GD, NIST, and KHGNRNLSS. An anthranilate-binding site is contributed by glycine 81. Residue serine 93 participates in Mg(2+) binding. Position 112 (asparagine 112) interacts with anthranilate. Position 167 (arginine 167) interacts with anthranilate. 2 residues coordinate Mg(2+): aspartate 226 and glutamate 227.

It belongs to the anthranilate phosphoribosyltransferase family. As to quaternary structure, homodimer. The cofactor is Mg(2+).

It catalyses the reaction N-(5-phospho-beta-D-ribosyl)anthranilate + diphosphate = 5-phospho-alpha-D-ribose 1-diphosphate + anthranilate. The protein operates within amino-acid biosynthesis; L-tryptophan biosynthesis; L-tryptophan from chorismate: step 2/5. In terms of biological role, catalyzes the transfer of the phosphoribosyl group of 5-phosphorylribose-1-pyrophosphate (PRPP) to anthranilate to yield N-(5'-phosphoribosyl)-anthranilate (PRA). The protein is Anthranilate phosphoribosyltransferase of Cereibacter sphaeroides (strain ATCC 17023 / DSM 158 / JCM 6121 / CCUG 31486 / LMG 2827 / NBRC 12203 / NCIMB 8253 / ATH 2.4.1.) (Rhodobacter sphaeroides).